The sequence spans 429 residues: 3-phosphoshikimate 1-carboxyvinyltransferase (429 aa).

3 residues coordinate 3-phosphoshikimate: K22, S23, and R27. Residue K22 participates in phosphoenolpyruvate binding. Residues G94 and R122 each contribute to the phosphoenolpyruvate site. 3-phosphoshikimate-binding residues include S167, Q169, D315, and K342. Q169 lines the phosphoenolpyruvate pocket. Catalysis depends on D315, which acts as the Proton acceptor. Phosphoenolpyruvate is bound by residues R346 and R388.

Belongs to the EPSP synthase family. Monomer.

The protein localises to the cytoplasm. The enzyme catalyses 3-phosphoshikimate + phosphoenolpyruvate = 5-O-(1-carboxyvinyl)-3-phosphoshikimate + phosphate. It functions in the pathway metabolic intermediate biosynthesis; chorismate biosynthesis; chorismate from D-erythrose 4-phosphate and phosphoenolpyruvate: step 6/7. In terms of biological role, catalyzes the transfer of the enolpyruvyl moiety of phosphoenolpyruvate (PEP) to the 5-hydroxyl of shikimate-3-phosphate (S3P) to produce enolpyruvyl shikimate-3-phosphate and inorganic phosphate. In Geobacter metallireducens (strain ATCC 53774 / DSM 7210 / GS-15), this protein is 3-phosphoshikimate 1-carboxyvinyltransferase.